The primary structure comprises 505 residues: Mannosylglucosyl-3-phosphoglycerate synthase (505 aa).

In terms of assembly, monomer in solution.

It carries out the reaction (2R)-2-O-(alpha-D-glucopyranosyl)-3-phospho-glycerate + GDP-alpha-D-mannose = (2R)-2-O-[alpha-D-mannopyranosyl-(1-&gt;2)-alpha-D-glucopyranosyl]-3-phospho-glycerate + GDP + H(+). With respect to regulation, not strictly dependent on divalent cations, but the presence of Mn(2+), Ca(2+), Mg(2+) or Co(2+) stimulates activity. Its function is as follows. Involved in the biosynthesis of the compatible solute mannosylglucosylglycerate through a phosphorylating pathway. Catalyzes the conversion of glucosyl-3-phosphoglycerate (GPG) to mannosylglucosyl-3-phosphoglycerate (MGPG). In Petrotoga mobilis (strain DSM 10674 / SJ95), this protein is Mannosylglucosyl-3-phosphoglycerate synthase.